A 439-amino-acid polypeptide reads, in one-letter code: Glucan 1,3-beta-glucosidase (439 aa).

The signal sequence occupies residues 1–18 (MLLSLLFLLSTFAFGALT). E227 acts as the Proton donor in catalysis. Intrachain disulfides connect C311/C437 and C336/C366. The active-site Nucleophile is E328.

This sequence belongs to the glycosyl hydrolase 5 (cellulase A) family.

Its subcellular location is the secreted. The catalysed reaction is Successive hydrolysis of beta-D-glucose units from the non-reducing ends of (1-&gt;3)-beta-D-glucans, releasing alpha-glucose.. Functionally, beta-glucanases participate in the metabolism of beta-glucan, the main structural component of the cell wall. It could also function biosynthetically as a transglycosylase. The chain is Glucan 1,3-beta-glucosidase (EXG1) from Lachancea kluyveri (strain ATCC 58438 / CBS 3082 / BCRC 21498 / NBRC 1685 / JCM 7257 / NCYC 543 / NRRL Y-12651) (Yeast).